The primary structure comprises 650 residues: Cytosolic Fe-S cluster assembly factor NAR1 (650 aa).

Residues Cys-22, Cys-81, Cys-84, Cys-87, Cys-215, Cys-270, Cys-480, and Cys-484 each contribute to the [4Fe-4S] cluster site.

Belongs to the NARF family.

In terms of biological role, component of the cytosolic Fe/S protein assembly machinery. Required for maturation of extramitochondrial Fe/S proteins. May play a role in the transfer of pre-assembled Fe/S clusters to target apoproteins. In Cryptococcus neoformans var. neoformans serotype D (strain JEC21 / ATCC MYA-565) (Filobasidiella neoformans), this protein is Cytosolic Fe-S cluster assembly factor NAR1 (NAR1).